We begin with the raw amino-acid sequence, 309 residues long: Coenzyme PQQ synthesis protein B (309 aa).

The protein belongs to the PqqB family.

The protein operates within cofactor biosynthesis; pyrroloquinoline quinone biosynthesis. Functionally, may be involved in the transport of PQQ or its precursor to the periplasm. This chain is Coenzyme PQQ synthesis protein B, found in Nitrosococcus oceani (strain ATCC 19707 / BCRC 17464 / JCM 30415 / NCIMB 11848 / C-107).